The sequence spans 235 residues: Enolase-phosphatase E1 (235 aa).

The Mg(2+) site is built by D10 and E12. Substrate contacts are provided by residues 130–131 (SS) and K169. D194 serves as a coordination point for Mg(2+).

It belongs to the HAD-like hydrolase superfamily. MasA/MtnC family. As to quaternary structure, monomer. Mg(2+) serves as cofactor.

Its subcellular location is the cytoplasm. The protein resides in the nucleus. It carries out the reaction 5-methylsulfanyl-2,3-dioxopentyl phosphate + H2O = 1,2-dihydroxy-5-(methylsulfanyl)pent-1-en-3-one + phosphate. It participates in amino-acid biosynthesis; L-methionine biosynthesis via salvage pathway; L-methionine from S-methyl-5-thio-alpha-D-ribose 1-phosphate: step 3/6. The protein operates within amino-acid biosynthesis; L-methionine biosynthesis via salvage pathway; L-methionine from S-methyl-5-thio-alpha-D-ribose 1-phosphate: step 4/6. Functionally, bifunctional enzyme that catalyzes the enolization of 2,3-diketo-5-methylthiopentyl-1-phosphate (DK-MTP-1-P) into the intermediate 2-hydroxy-3-keto-5-methylthiopentenyl-1-phosphate (HK-MTPenyl-1-P), which is then dephosphorylated to form the acireductone 1,2-dihydroxy-3-keto-5-methylthiopentene (DHK-MTPene). This chain is Enolase-phosphatase E1, found in Komagataella phaffii (strain GS115 / ATCC 20864) (Yeast).